The following is a 391-amino-acid chain: Zinc finger protein ubi-d4 (391 aa).

At A2 the chain carries N-acetylalanine. Glycyl lysine isopeptide (Lys-Gly) (interchain with G-Cter in SUMO2) cross-links involve residues K10, K99, K107, and K108. Disordered regions lie at residues 79–146 (WRKK…LGEF) and 165–196 (DDLD…ARKK). 2 stretches are compositionally biased toward basic and acidic residues: residues 100–110 (PDTDQTLKKEG) and 126–140 (DPLE…RVDD). The residue at position 142 (S142) is a Phosphoserine. The span at 165 to 174 (DDLDDEDYEE) shows a compositional bias: acidic residues. Y172 carries the phosphotyrosine modification. At T176 the chain carries Phosphothreonine. Residues K178 and K196 each participate in a glycyl lysine isopeptide (Lys-Gly) (interchain with G-Cter in SUMO2) cross-link. S200 is subject to Phosphoserine. The C2H2-type zinc finger occupies 209 to 232 (YACDICGKRYKNRPGLSYHYAHSH). Residues 233-266 (LAEEEGEDKEDSQPPTPVSQRSEEQKSKKGPDGL) form a disordered region. S244 carries the post-translational modification Phosphoserine. Residues 253–263 (RSEEQKSKKGP) show a composition bias toward basic and acidic residues. PHD-type zinc fingers lie at residues 270–330 (NNYC…CKCC) and 327–377 (CKCC…CLDL). S280 carries the post-translational modification Phosphoserine. K281 is covalently cross-linked (Glycyl lysine isopeptide (Lys-Gly) (interchain with G-Cter in SUMO2)).

Belongs to the requiem/DPF family. As to quaternary structure, interacts with the nucleosomes, in particular nucleosomes bearing histone H3 crotonylated at 'Lys-14' (H3K14cr) for which DPF2 has high affinity. Also interacts (via PHD-type zinc finger domains) with histone H3 butyrylated at 'Lys-14' (H3K14bu), histone H3 propionylated at 'Lys-14' (H3K14pr), and histone H3 acetylated at 'Lys-14' (H3K14ac). Interacts with histone H3 acetylated at 'Lys-9' (H3K9ac), histone H3 di-methylated at 'Lys-9' (H3K9me2), and histone H3 tri-methylated at 'Lys-9' (H3K9me3). Interacts with histone H4 acetylated at 'Lys-12' (H4K12ac). Interacts with histone H4 acetylated at 'Lys-16' (H4K16ac). Interacts with SWI/SNF complex components. Interacts with SMARCA2, SMARCA4, SMARCB1 and SMARCD1. Interacts with SMARCC1, SMARCC2 and ACTL6A. Interacts with RUNX1. Ubiquitous.

Its subcellular location is the nucleus. The protein localises to the cytoplasm. In terms of biological role, plays an active role in transcriptional regulation by binding modified histones H3 and H4. Is a negative regulator of myeloid differentiation of hematopoietic progenitor cells. Might also have a role in the development and maturation of lymphoid cells. Involved in the regulation of non-canonical NF-kappa-B pathway. This chain is Zinc finger protein ubi-d4 (DPF2), found in Homo sapiens (Human).